Here is a 1088-residue protein sequence, read N- to C-terminus: DNA polymerase delta catalytic subunit (1088 aa).

The protein belongs to the DNA polymerase type-B family. In terms of assembly, heterodimer with subunits of 125 kDa and 50 kDa. The 125 kDa subunit contains the polymerase active site and most likely the active site for the 3'-5' exonuclease activity.

The protein resides in the nucleus. The catalysed reaction is DNA(n) + a 2'-deoxyribonucleoside 5'-triphosphate = DNA(n+1) + diphosphate. Functionally, this polymerase possesses two enzymatic activities: DNA synthesis (polymerase) and an exonucleolytic activity that degrades single-stranded DNA in the 3'- to 5'-direction. The polypeptide is DNA polymerase delta catalytic subunit (POLD1) (Glycine max (Soybean)).